Reading from the N-terminus, the 614-residue chain is Putative ankyrin repeat protein RBE_0997 (614 aa).

ANK repeat units lie at residues 3 to 32, 36 to 65, 69 to 98, 102 to 131, 135 to 164, 168 to 197, 201 to 231, 239 to 268, and 272 to 301; these read KDEE…DPNI, DDKP…NPNA, DGEP…DPNL, RKNT…NLNA, SGYP…NPNL, DGSP…NVEA, DGNT…DKEK, NGET…TVNI, and AGYT…ELKE. Residues 348–580 form the Glutamine amidotransferase type-1 domain; the sequence is NVEDIDYRKI…VQSAETFMNK (233 aa). Cys444 serves as the catalytic Nucleophile. Catalysis depends on residues His547 and Glu549.

This chain is Putative ankyrin repeat protein RBE_0997, found in Rickettsia bellii (strain RML369-C).